Consider the following 91-residue polypeptide: Small ribosomal subunit protein uS19 (91 aa).

The protein belongs to the universal ribosomal protein uS19 family.

Protein S19 forms a complex with S13 that binds strongly to the 16S ribosomal RNA. The sequence is that of Small ribosomal subunit protein uS19 from Alcanivorax borkumensis (strain ATCC 700651 / DSM 11573 / NCIMB 13689 / SK2).